The following is a 185-amino-acid chain: Photosystem I assembly protein Ycf4 (185 aa).

A run of 2 helical transmembrane segments spans residues 21-43 (NFFWACILFLGSLGFLAVGASSY) and 63-85 (GVVMSFYGIAGLFISSYLWCTIL).

The protein belongs to the Ycf4 family.

Its subcellular location is the plastid. The protein localises to the chloroplast thylakoid membrane. In terms of biological role, seems to be required for the assembly of the photosystem I complex. The sequence is that of Photosystem I assembly protein Ycf4 from Saccharum hybrid (Sugarcane).